Reading from the N-terminus, the 137-residue chain is Putative mucosal pentraxin homolog (137 aa).

The region spanning 1 to 137 (MGMYLLHIGN…YVVTKPKVWA (137 aa)) is the Pentraxin (PTX) domain. Glu-73, Asp-75, and Gln-85 together coordinate Ca(2+).

It belongs to the pentraxin family. As to expression, not expressed in the intestinal tract including ascending colon, descending colon and rectum. Not expressed in the human colon cancer cell lines HT-29 and CaCo-2.

The chain is Putative mucosal pentraxin homolog (MPTX1) from Homo sapiens (Human).